Reading from the N-terminus, the 208-residue chain is Imidazoleglycerol-phosphate dehydratase (208 aa).

The segment at 1-22 is disordered; the sequence is MTEDTETSSTGAGADDRTAAIS.

The protein belongs to the imidazoleglycerol-phosphate dehydratase family.

The protein localises to the cytoplasm. It carries out the reaction D-erythro-1-(imidazol-4-yl)glycerol 3-phosphate = 3-(imidazol-4-yl)-2-oxopropyl phosphate + H2O. It functions in the pathway amino-acid biosynthesis; L-histidine biosynthesis; L-histidine from 5-phospho-alpha-D-ribose 1-diphosphate: step 6/9. This Haloquadratum walsbyi (strain DSM 16790 / HBSQ001) protein is Imidazoleglycerol-phosphate dehydratase.